Reading from the N-terminus, the 449-residue chain is Phosphoglucosamine mutase (449 aa).

The active-site Phosphoserine intermediate is Ser-104. 4 residues coordinate Mg(2+): Ser-104, Asp-243, Asp-245, and Asp-247. At Ser-104 the chain carries Phosphoserine.

This sequence belongs to the phosphohexose mutase family. It depends on Mg(2+) as a cofactor. Activated by phosphorylation.

The catalysed reaction is alpha-D-glucosamine 1-phosphate = D-glucosamine 6-phosphate. Its function is as follows. Catalyzes the conversion of glucosamine-6-phosphate to glucosamine-1-phosphate. This Xanthomonas oryzae pv. oryzae (strain PXO99A) protein is Phosphoglucosamine mutase.